The chain runs to 218 residues: Hypoxanthine-guanine phosphoribosyltransferase (218 aa).

Position 69 (lysine 69) interacts with GMP. Lysine 103 is modified (N6-acetyllysine). Lysine 115 participates in a covalent cross-link: Glycyl lysine isopeptide (Lys-Gly) (interchain with G-Cter in SUMO1); alternate. Residue lysine 115 forms a Glycyl lysine isopeptide (Lys-Gly) (interchain with G-Cter in SUMO2); alternate linkage. GMP contacts are provided by residues 134 to 142 (EDIIDTGKT), lysine 166, 186 to 188 (KFV), and aspartate 194. Catalysis depends on aspartate 138, which acts as the Proton acceptor. Residue threonine 142 is modified to Phosphothreonine. Aspartate 194 is a Mg(2+) binding site.

It belongs to the purine/pyrimidine phosphoribosyltransferase family. Homotetramer. It depends on Mg(2+) as a cofactor.

The protein resides in the cytoplasm. The enzyme catalyses IMP + diphosphate = hypoxanthine + 5-phospho-alpha-D-ribose 1-diphosphate. The catalysed reaction is GMP + diphosphate = guanine + 5-phospho-alpha-D-ribose 1-diphosphate. The protein operates within purine metabolism; IMP biosynthesis via salvage pathway; IMP from hypoxanthine: step 1/1. Converts guanine to guanosine monophosphate, and hypoxanthine to inosine monophosphate. Transfers the 5-phosphoribosyl group from 5-phosphoribosylpyrophosphate onto the purine. Plays a central role in the generation of purine nucleotides through the purine salvage pathway. This chain is Hypoxanthine-guanine phosphoribosyltransferase (Hprt1), found in Mus musculus (Mouse).